The primary structure comprises 346 residues: Nicotinate-nucleotide--dimethylbenzimidazole phosphoribosyltransferase (346 aa).

E313 serves as the catalytic Proton acceptor.

Belongs to the CobT family.

It carries out the reaction 5,6-dimethylbenzimidazole + nicotinate beta-D-ribonucleotide = alpha-ribazole 5'-phosphate + nicotinate + H(+). It functions in the pathway nucleoside biosynthesis; alpha-ribazole biosynthesis; alpha-ribazole from 5,6-dimethylbenzimidazole: step 1/2. Functionally, catalyzes the synthesis of alpha-ribazole-5'-phosphate from nicotinate mononucleotide (NAMN) and 5,6-dimethylbenzimidazole (DMB). This is Nicotinate-nucleotide--dimethylbenzimidazole phosphoribosyltransferase from Parabacteroides distasonis (strain ATCC 8503 / DSM 20701 / CIP 104284 / JCM 5825 / NCTC 11152).